The chain runs to 174 residues: MNKEGKHQLVAEVHDKLQRAKAVFLADFRGMNVGQATDLRNELRKADVEYKVIKNTLLELASKGTDKEALNPYFAGPTAVAISYDDPVAAAKVLSRFAKEQTNPFTLKAGVLSGKAISPADIQALADLPSREVLIAKMLGSMQAPATNFVGVLAAVPGSFVRALNAIRIKKEGN.

It belongs to the universal ribosomal protein uL10 family. As to quaternary structure, part of the ribosomal stalk of the 50S ribosomal subunit. The N-terminus interacts with L11 and the large rRNA to form the base of the stalk. The C-terminus forms an elongated spine to which L12 dimers bind in a sequential fashion forming a multimeric L10(L12)X complex.

Its function is as follows. Forms part of the ribosomal stalk, playing a central role in the interaction of the ribosome with GTP-bound translation factors. This Geotalea uraniireducens (strain Rf4) (Geobacter uraniireducens) protein is Large ribosomal subunit protein uL10.